We begin with the raw amino-acid sequence, 100 residues long: Glyceraldehyde-3-phosphate dehydrogenase, testis-specific (100 aa).

The NAD(+) site is built by Asp-39 and Thr-64. Arg-89 serves as a coordination point for D-glyceraldehyde 3-phosphate.

Belongs to the glyceraldehyde-3-phosphate dehydrogenase family. As to quaternary structure, homotetramer.

The protein localises to the cytoplasm. It carries out the reaction D-glyceraldehyde 3-phosphate + phosphate + NAD(+) = (2R)-3-phospho-glyceroyl phosphate + NADH + H(+). It functions in the pathway carbohydrate degradation; glycolysis; pyruvate from D-glyceraldehyde 3-phosphate: step 1/5. Functionally, may play an important role in regulating the switch between different pathways for energy production during spermiogenesis and in the spermatozoon. Required for sperm motility and male fertility. The protein is Glyceraldehyde-3-phosphate dehydrogenase, testis-specific of Mesocricetus auratus (Golden hamster).